A 320-amino-acid polypeptide reads, in one-letter code: Putative fatty acid elongase 3 (320 aa).

A glycan (N-linked (GlcNAc...) asparagine) is linked at N14. Helical transmembrane passes span 33 to 53 (WMQN…AVIF), 67 to 87 (LDTP…LGFL), 120 to 140 (FWTE…IFIV), 145 to 165 (PLIF…WHAY), 203 to 223 (MAMV…IIGV), and 242 to 262 (LGLC…FFYH).

Belongs to the ELO family.

The protein resides in the membrane. It catalyses the reaction a very-long-chain acyl-CoA + malonyl-CoA + H(+) = a very-long-chain 3-oxoacyl-CoA + CO2 + CoA. Its pathway is lipid metabolism; fatty acid biosynthesis. Its function is as follows. Could be implicated in synthesis of very long chain fatty acids. May be required for normally rapid growth. This chain is Putative fatty acid elongase 3 (elo-3), found in Caenorhabditis elegans.